The chain runs to 277 residues: E3 ubiquitin-protein ligase CCNB1IP1 (277 aa).

The RING-type; atypical zinc-finger motif lies at 4–51; it reads CEDMLLCNYRKCRIKLSGYAWVTACSHIFCDQHGSGEFSRSPAICPAC. The stretch at 127–182 forms a coiled coil; that stretch reads QQIQSKDVELTSMKGEVTSMKKVLEEYKKKFSDISEKLMERNRQYQKLQGLYDSLR.

Interacts with CCNB1, UBE2L3 and NF2. In terms of processing, ubiquitinated; autoubiquitinated. Post-translationally, phosphorylated by CDK1 on serine or threonine residues (in vitro). In terms of tissue distribution, highly expressed in heart. Detected at intermediate levels in liver and kidney, and at low levels in placenta, brain and lung.

Its subcellular location is the nucleus. The protein resides in the chromosome. The enzyme catalyses S-ubiquitinyl-[E2 ubiquitin-conjugating enzyme]-L-cysteine + [acceptor protein]-L-lysine = [E2 ubiquitin-conjugating enzyme]-L-cysteine + N(6)-ubiquitinyl-[acceptor protein]-L-lysine.. The protein operates within protein modification; protein ubiquitination. In terms of biological role, ubiquitin E3 ligase that acts as a limiting factor for crossing-over during meiosis: required during zygonema to limit the colocalization of RNF212 with MutS-gamma-associated recombination sites and thereby establish early differentiation of crossover and non-crossover sites. Later, it is directed by MutL-gamma to stably accumulate at designated crossover sites. Probably promotes the dissociation of RNF212 and MutS-gamma to allow the progression of recombination and the implementation of the final steps of crossing over. Modulates cyclin-B levels and participates in the regulation of cell cycle progression through the G2 phase. Overexpression causes delayed entry into mitosis. This chain is E3 ubiquitin-protein ligase CCNB1IP1 (CCNB1IP1), found in Homo sapiens (Human).